A 357-amino-acid chain; its full sequence is 2-oxoglutarate-dependent dioxygenase 11 (357 aa).

The Fe2OG dioxygenase domain occupies Gln-207 to Pro-307. 3 residues coordinate Fe cation: His-231, Asp-233, and His-288. Arg-298 contacts 2-oxoglutarate.

This sequence belongs to the iron/ascorbate-dependent oxidoreductase family. The cofactor is Fe(2+). L-ascorbate is required as a cofactor. Expressed in shoots.

It localises to the cytoplasm. The catalysed reaction is melatonin + 2-oxoglutarate + O2 = 2-hydroxymelatonin + succinate + CO2. Functionally, involved in melatonin degradation. Catalyzes the hydroxylation of melatonin to produce 2-hydroxymelatonin. The sequence is that of 2-oxoglutarate-dependent dioxygenase 11 from Oryza sativa subsp. japonica (Rice).